The chain runs to 833 residues: DNA ligase (833 aa).

NAD(+) is bound by residues 35–39 (DADYD), 84–85 (SL), and Glu115. Lys117 acts as the N6-AMP-lysine intermediate in catalysis. The NAD(+) site is built by Arg138, Glu175, Lys292, and Lys316. The Zn(2+) site is built by Cys410, Cys413, Cys428, and Cys434. Residues 750 to 833 (EKTGPLDGQT…AFLGDHGQQP (84 aa)) form the BRCT domain.

Belongs to the NAD-dependent DNA ligase family. LigA subfamily. Mg(2+) is required as a cofactor. Mn(2+) serves as cofactor.

It catalyses the reaction NAD(+) + (deoxyribonucleotide)n-3'-hydroxyl + 5'-phospho-(deoxyribonucleotide)m = (deoxyribonucleotide)n+m + AMP + beta-nicotinamide D-nucleotide.. Functionally, DNA ligase that catalyzes the formation of phosphodiester linkages between 5'-phosphoryl and 3'-hydroxyl groups in double-stranded DNA using NAD as a coenzyme and as the energy source for the reaction. It is essential for DNA replication and repair of damaged DNA. This chain is DNA ligase, found in Xanthomonas axonopodis pv. citri (strain 306).